The following is a 462-amino-acid chain: Argininosuccinate lyase (462 aa).

Belongs to the lyase 1 family. Argininosuccinate lyase subfamily.

Its subcellular location is the cytoplasm. It catalyses the reaction 2-(N(omega)-L-arginino)succinate = fumarate + L-arginine. Its pathway is amino-acid biosynthesis; L-arginine biosynthesis; L-arginine from L-ornithine and carbamoyl phosphate: step 3/3. This Hydrogenovibrio crunogenus (strain DSM 25203 / XCL-2) (Thiomicrospira crunogena) protein is Argininosuccinate lyase.